The chain runs to 502 residues: Lanosterol 14-alpha demethylase (502 aa).

A helical transmembrane segment spans residues 22-42 (GNLASMLLIACAFTLSLVYLF). Cysteine 448 provides a ligand contact to heme.

Belongs to the cytochrome P450 family. Heme serves as cofactor. Ubiquitinated by MARCHF6, leading to proteasomal degradation.

Its subcellular location is the endoplasmic reticulum membrane. It localises to the microsome membrane. It carries out the reaction a 14alpha-methyl steroid + 3 reduced [NADPH--hemoprotein reductase] + 3 O2 = a Delta(14) steroid + formate + 3 oxidized [NADPH--hemoprotein reductase] + 4 H2O + 4 H(+). It catalyses the reaction lanosterol + 3 reduced [NADPH--hemoprotein reductase] + 3 O2 = 4,4-dimethyl-5alpha-cholesta-8,14,24-trien-3beta-ol + formate + 3 oxidized [NADPH--hemoprotein reductase] + 4 H2O + 4 H(+). The enzyme catalyses 24,25-dihydrolanosterol + 3 reduced [NADPH--hemoprotein reductase] + 3 O2 = 4,4-dimethyl-8,14-cholestadien-3beta-ol + formate + 3 oxidized [NADPH--hemoprotein reductase] + 4 H2O + 4 H(+). The catalysed reaction is a 14alpha-methyl steroid + reduced [NADPH--hemoprotein reductase] + O2 = a 14alpha-hydroxymethyl steroid + oxidized [NADPH--hemoprotein reductase] + H2O + H(+). It carries out the reaction a 14alpha-hydroxymethyl steroid + reduced [NADPH--hemoprotein reductase] + O2 = a 14alpha-formyl steroid + oxidized [NADPH--hemoprotein reductase] + 2 H2O + H(+). It catalyses the reaction a 14alpha-formyl steroid + reduced [NADPH--hemoprotein reductase] + O2 = a Delta(14) steroid + formate + oxidized [NADPH--hemoprotein reductase] + H2O + 2 H(+). The enzyme catalyses lanosterol + reduced [NADPH--hemoprotein reductase] + O2 = 32-hydroxylanosterol + oxidized [NADPH--hemoprotein reductase] + H2O + H(+). The catalysed reaction is 32-hydroxylanosterol + reduced [NADPH--hemoprotein reductase] + O2 = 32-oxolanosterol + oxidized [NADPH--hemoprotein reductase] + 2 H2O + H(+). It carries out the reaction 32-oxolanosterol + reduced [NADPH--hemoprotein reductase] + O2 = 4,4-dimethyl-5alpha-cholesta-8,14,24-trien-3beta-ol + formate + oxidized [NADPH--hemoprotein reductase] + H2O + 2 H(+). It catalyses the reaction 24,25-dihydrolanosterol + reduced [NADPH--hemoprotein reductase] + O2 = 32-hydroxy-24,25-dihydrolanosterol + oxidized [NADPH--hemoprotein reductase] + H2O + H(+). The enzyme catalyses 32-hydroxy-24,25-dihydrolanosterol + reduced [NADPH--hemoprotein reductase] + O2 = 32-oxo-24,25-dihydrolanosterol + oxidized [NADPH--hemoprotein reductase] + 2 H2O + H(+). The catalysed reaction is 32-oxo-24,25-dihydrolanosterol + reduced [NADPH--hemoprotein reductase] + O2 = 4,4-dimethyl-8,14-cholestadien-3beta-ol + formate + oxidized [NADPH--hemoprotein reductase] + H2O + 2 H(+). Its pathway is steroid biosynthesis; zymosterol biosynthesis; zymosterol from lanosterol: step 1/6. Its activity is regulated as follows. Inhibited by azalanstat. Inhibited by azole antifungal agents ketoconazole, itraconazole and fluconazole. In terms of biological role, sterol 14alpha-demethylase that plays a critical role in the cholesterol biosynthesis pathway, being cholesterol the major sterol component in mammalian membranes as well as a precursor for bile acid and steroid hormone synthesis. Cytochrome P450 monooxygenase that catalyzes the three-step oxidative removal of the 14alpha-methyl group (C-32) of sterols such as lanosterol (lanosta-8,24-dien-3beta-ol) and 24,25-dihydrolanosterol (DHL) in the form of formate, and converts the sterols to 4,4-dimethyl-5alpha-cholesta-8,14,24-trien-3beta-ol and 4,4-dimethyl-8,14-cholestadien-3beta-ol, respectively, which are intermediates of cholesterol biosynthesis. Can also demethylate substrates not intrinsic to mammals, such as eburicol (24-methylene-24,25-dihydrolanosterol), but at a lower rate than DHL. The protein is Lanosterol 14-alpha demethylase of Bos taurus (Bovine).